The chain runs to 411 residues: Translation initiation factor 2 subunit gamma (411 aa).

Positions Q9–K201 constitute a tr-type G domain. Residues G18–S25 form a G1 region. Mg(2+) is bound by residues D21, S25, G46, and S48. D21 to T26 lines the GTP pocket. The G2 stretch occupies residues G46–K50. The G3 stretch occupies residues D88–G91. Residues N144 to D147 and S179 to Y181 each bind GTP. A G4 region spans residues N144–D147. Positions S179–Y181 are G5.

The protein belongs to the TRAFAC class translation factor GTPase superfamily. Classic translation factor GTPase family. EIF2G subfamily. Heterotrimer composed of an alpha, a beta and a gamma chain. Mg(2+) is required as a cofactor.

It carries out the reaction GTP + H2O = GDP + phosphate + H(+). Its function is as follows. eIF-2 functions in the early steps of protein synthesis by forming a ternary complex with GTP and initiator tRNA. The sequence is that of Translation initiation factor 2 subunit gamma from Thermoplasma acidophilum (strain ATCC 25905 / DSM 1728 / JCM 9062 / NBRC 15155 / AMRC-C165).